A 254-amino-acid chain; its full sequence is Triosephosphate isomerase (254 aa).

12–14 (NWK) contacts substrate. The active-site Electrophile is the His99. Glu169 serves as the catalytic Proton acceptor. Residues Gly175, Ser214, and 235-236 (GG) each bind substrate.

Belongs to the triosephosphate isomerase family. In terms of assembly, homodimer.

It localises to the cytoplasm. The catalysed reaction is D-glyceraldehyde 3-phosphate = dihydroxyacetone phosphate. It functions in the pathway carbohydrate biosynthesis; gluconeogenesis. Its pathway is carbohydrate degradation; glycolysis; D-glyceraldehyde 3-phosphate from glycerone phosphate: step 1/1. Involved in the gluconeogenesis. Catalyzes stereospecifically the conversion of dihydroxyacetone phosphate (DHAP) to D-glyceraldehyde-3-phosphate (G3P). This is Triosephosphate isomerase from Bartonella quintana (strain Toulouse) (Rochalimaea quintana).